A 185-amino-acid polypeptide reads, in one-letter code: Hypoxanthine/guanine phosphoribosyltransferase (185 aa).

This sequence belongs to the purine/pyrimidine phosphoribosyltransferase family. Archaeal HPRT subfamily. As to quaternary structure, homodimer.

The protein resides in the cytoplasm. It carries out the reaction IMP + diphosphate = hypoxanthine + 5-phospho-alpha-D-ribose 1-diphosphate. It catalyses the reaction GMP + diphosphate = guanine + 5-phospho-alpha-D-ribose 1-diphosphate. It participates in purine metabolism; IMP biosynthesis via salvage pathway; IMP from hypoxanthine: step 1/1. In terms of biological role, catalyzes a salvage reaction resulting in the formation of IMP that is energically less costly than de novo synthesis. This Aciduliprofundum boonei (strain DSM 19572 / T469) protein is Hypoxanthine/guanine phosphoribosyltransferase.